Consider the following 153-residue polypeptide: NADH dehydrogenase [ubiquinone] 1 beta subcomplex subunit 11, mitochondrial (153 aa).

The transit peptide at 1 to 29 (MAAGLFGLSARRLLAAAATRGLPAARVRW) directs the protein to the mitochondrion. The interval 40–76 (PSAVAGKRPPEPTTPWQEDPEPEDENLYEKNPDSHGY) is disordered. The segment covering 66–76 (LYEKNPDSHGY) has biased composition (basic and acidic residues). Residues 89 to 109 (LVFFFGVSIILVLGSTFVAYL) form a helical membrane-spanning segment.

This sequence belongs to the complex I NDUFB11 subunit family. In terms of assembly, complex I is composed of 45 different subunits. Interacts with BCAP31. In terms of tissue distribution, ubiquitous.

Its subcellular location is the mitochondrion inner membrane. Its function is as follows. Accessory subunit of the mitochondrial membrane respiratory chain NADH dehydrogenase (Complex I), that is believed not to be involved in catalysis. Complex I functions in the transfer of electrons from NADH to the respiratory chain. The immediate electron acceptor for the enzyme is believed to be ubiquinone. This is NADH dehydrogenase [ubiquinone] 1 beta subcomplex subunit 11, mitochondrial (NDUFB11) from Homo sapiens (Human).